The primary structure comprises 543 residues: MFSLQELCRKNIYILPYPLGEHVLQQLGLYWKGYGSLQRIGDDHVLLQQDLIFSINEALRMAGEEGNNEVVKLLLLWEGNLHYAIIGALEGDRYDLIHKYYGQIGDCHKILPLIQDPQIFEKCHELSTSCNIRCLLEHAVKHNMLSILQKHKDQIRFHLALTQILFELACHERKNDIIRWIGYSLHIYQLETIFDVAFAHKNLSLYVLGYELLMHKVNTEAANIDLPNLLSYHLRTAAAGGLLHFMFETLKHGGYVDKAVLSAAISYKHRKVVAHFIHQVPRKTVEKLLLHAVQTRAPKKTLNLLLSSLNYSVHPITKQLVRNVVDYRSTLIVKLLLMRRKRKLNLVDAVLARLVRYSTYTDTVKFMGEFSVSPEKVIKMAARESRTFMIEMISKAVWKNHPQTMIHHLKQLADTMKPQSGKDLIIYTIHYIYQSSNLLVAEEEKNIFKLAKFYANHNSVNRFKQICEDYYTLDVDTRFKTLILECFEIAVQKNYPRIATIVDDFIRFLFYKGDITEEEISEAYSLKNAELYVDLKWLQQEEN.

The protein belongs to the asfivirus MGF 505 family.

In terms of biological role, plays a role in virus cell tropism, and may be required for efficient virus replication in macrophages. In Ornithodoros (relapsing fever ticks), this protein is Protein MGF 505-10R.